A 207-amino-acid polypeptide reads, in one-letter code: Octanoyltransferase (207 aa).

The BPL/LPL catalytic domain occupies 29-204 (AETRDELWVV…HLERHLSTSK (176 aa)). Substrate-binding positions include 68-75 (RGGQITYH), 135-137 (SLG), and 148-150 (GLS). Cys166 acts as the Acyl-thioester intermediate in catalysis.

The protein belongs to the LipB family.

It localises to the cytoplasm. The catalysed reaction is octanoyl-[ACP] + L-lysyl-[protein] = N(6)-octanoyl-L-lysyl-[protein] + holo-[ACP] + H(+). The protein operates within protein modification; protein lipoylation via endogenous pathway; protein N(6)-(lipoyl)lysine from octanoyl-[acyl-carrier-protein]: step 1/2. Functionally, catalyzes the transfer of endogenously produced octanoic acid from octanoyl-acyl-carrier-protein onto the lipoyl domains of lipoate-dependent enzymes. Lipoyl-ACP can also act as a substrate although octanoyl-ACP is likely to be the physiological substrate. In Chromobacterium violaceum (strain ATCC 12472 / DSM 30191 / JCM 1249 / CCUG 213 / NBRC 12614 / NCIMB 9131 / NCTC 9757 / MK), this protein is Octanoyltransferase.